A 199-amino-acid chain; its full sequence is Imidazole glycerol phosphate synthase subunit HisH 2 (199 aa).

Residues 1-199 (MIAVIDVSGN…NNFLSLESKC (199 aa)) enclose the Glutamine amidotransferase type-1 domain. The active-site Nucleophile is the cysteine 76. Active-site residues include histidine 177 and glutamate 179.

As to quaternary structure, heterodimer of HisH and HisF.

Its subcellular location is the cytoplasm. The catalysed reaction is 5-[(5-phospho-1-deoxy-D-ribulos-1-ylimino)methylamino]-1-(5-phospho-beta-D-ribosyl)imidazole-4-carboxamide + L-glutamine = D-erythro-1-(imidazol-4-yl)glycerol 3-phosphate + 5-amino-1-(5-phospho-beta-D-ribosyl)imidazole-4-carboxamide + L-glutamate + H(+). It catalyses the reaction L-glutamine + H2O = L-glutamate + NH4(+). The protein operates within amino-acid biosynthesis; L-histidine biosynthesis; L-histidine from 5-phospho-alpha-D-ribose 1-diphosphate: step 5/9. In terms of biological role, IGPS catalyzes the conversion of PRFAR and glutamine to IGP, AICAR and glutamate. The HisH subunit provides the glutamine amidotransferase activity that produces the ammonia necessary to HisF for the synthesis of IGP and AICAR. The chain is Imidazole glycerol phosphate synthase subunit HisH 2 from Legionella pneumophila (strain Lens).